The following is a 350-amino-acid chain: Palmitoyltransferase erf2 (350 aa).

Residues 1–86 are Cytoplasmic-facing; the sequence is MSYEKHSDAK…RLQMSSQYKA (86 aa). The helical transmembrane segment at 87–107 threads the bilayer; that stretch reads FLISLFALILPGVLFFIFSAF. At 108 to 112 the chain is on the lumenal side; the sequence is WLWHH. Residues 113–133 traverse the membrane as a helical segment; sequence VSPAVPITFAYLYALAVVSMF. Residues 134–225 lie on the Cytoplasmic side of the membrane; sequence KCSTADPGIL…NTCIGRRNYR (92 aa). The region spanning 182 to 232 is the DHHC domain; sequence VYCHTCHLYRPPRASHCHLCDNCVEYLDHHCIWLNTCIGRRNYRYYFIFLL. Residue cysteine 212 is the S-palmitoyl cysteine intermediate of the active site. A helical membrane pass occupies residues 226-246; sequence YYFIFLLSVVLSALYLTGLGF. The Lumenal segment spans residues 247 to 270; that stretch reads YTSIGSFHESTDTNFAAHLRRPWA. The chain crosses the membrane as a helical span at residues 271 to 291; the sequence is GVSFFLGIYGALGAILPGILF. The Cytoplasmic segment spans residues 292–350; it reads CYQCYLISVGQNVHEYLRAKSTETEDVHPFHDSIWLNFLVVLCRPKNVSYVRPTRKSYV.

It belongs to the DHHC palmitoyltransferase family. ERF2/ZDHHC9 subfamily. As to quaternary structure, interacts with erf4. Autopalmitoylated.

Its subcellular location is the endoplasmic reticulum membrane. The protein resides in the golgi apparatus. It is found in the golgi stack membrane. It carries out the reaction L-cysteinyl-[protein] + hexadecanoyl-CoA = S-hexadecanoyl-L-cysteinyl-[protein] + CoA. Functionally, the erf2-erf4 complex is a palmitoyltransferase with a major role in driving sexual development. Palmitoylates ras1. Palmitoylates isp3. Palmitoylates rho3. In Schizosaccharomyces pombe (strain 972 / ATCC 24843) (Fission yeast), this protein is Palmitoyltransferase erf2.